The sequence spans 304 residues: Homoserine dehydrogenase (304 aa).

NADP(+) is bound by residues Y8, N10, V11, R38, R39, and S73. Y8 lines the NADPH pocket. Residues V11 and R38 each contribute to the NADPH site. V11 contributes to the NAD(+) binding site. S73, S74, T100, and K102 together coordinate NADPH. An NAD(+)-binding site is contributed by S73. The NADP(+) site is built by T100 and K102. Residues V129 and T133 each coordinate Na(+). 2 residues coordinate NADP(+): G182 and E185. L-homoserine-binding residues include E185 and D196. K200 functions as the Proton donor in the catalytic mechanism. G284 contributes to the NADP(+) binding site. G284 provides a ligand contact to NADPH. An NAD(+)-binding site is contributed by G284.

Belongs to the homoserine dehydrogenase family. In terms of assembly, homodimer. It depends on a metal cation as a cofactor. The enzyme is activated by reductive cleavage of the interchain disulfide bond between the two subunits.

The catalysed reaction is L-homoserine + NADP(+) = L-aspartate 4-semialdehyde + NADPH + H(+). It carries out the reaction L-homoserine + NAD(+) = L-aspartate 4-semialdehyde + NADH + H(+). It participates in amino-acid biosynthesis; L-methionine biosynthesis via de novo pathway; L-homoserine from L-aspartate: step 3/3. It functions in the pathway amino-acid biosynthesis; L-threonine biosynthesis; L-threonine from L-aspartate: step 3/5. With respect to regulation, inhibited by cysteine. Catalyzes the conversion of L-aspartate-beta-semialdehyde (L-Asa) to L-homoserine (L-Hse), the third step in the biosynthesis of threonine and methionine from aspartate. This chain is Homoserine dehydrogenase, found in Sulfurisphaera tokodaii (strain DSM 16993 / JCM 10545 / NBRC 100140 / 7) (Sulfolobus tokodaii).